The following is a 459-amino-acid chain: Cysteine--tRNA ligase (459 aa).

Cys-31 lines the Zn(2+) pocket. The short motif at 33–43 (PTVYYNPHIGN) is the 'HIGH' region element. Positions 216, 241, and 245 each coordinate Zn(2+). The short motif at 274 to 278 (KMSKS) is the 'KMSKS' region element. Lys-277 lines the ATP pocket.

It belongs to the class-I aminoacyl-tRNA synthetase family. Monomer. Requires Zn(2+) as cofactor.

Its subcellular location is the cytoplasm. The enzyme catalyses tRNA(Cys) + L-cysteine + ATP = L-cysteinyl-tRNA(Cys) + AMP + diphosphate. In Rickettsia conorii (strain ATCC VR-613 / Malish 7), this protein is Cysteine--tRNA ligase.